Reading from the N-terminus, the 535-residue chain is Ribonuclease Y (535 aa).

The helical transmembrane segment at isoleucine 4–isoleucine 24 threads the bilayer. The segment at glutamate 118–isoleucine 141 is disordered. The KH domain occupies threonine 225–leucine 285. One can recognise an HD domain in the interval valine 351–alanine 444.

Belongs to the RNase Y family.

It localises to the cell membrane. Its function is as follows. Endoribonuclease that initiates mRNA decay. The protein is Ribonuclease Y of Streptococcus pyogenes serotype M1.